We begin with the raw amino-acid sequence, 470 residues long: UDP-N-acetylmuramoylalanine--D-glutamate ligase (470 aa).

124–130 (GTNGKTT) contributes to the ATP binding site.

This sequence belongs to the MurCDEF family.

The protein localises to the cytoplasm. It carries out the reaction UDP-N-acetyl-alpha-D-muramoyl-L-alanine + D-glutamate + ATP = UDP-N-acetyl-alpha-D-muramoyl-L-alanyl-D-glutamate + ADP + phosphate + H(+). The protein operates within cell wall biogenesis; peptidoglycan biosynthesis. Its function is as follows. Cell wall formation. Catalyzes the addition of glutamate to the nucleotide precursor UDP-N-acetylmuramoyl-L-alanine (UMA). The protein is UDP-N-acetylmuramoylalanine--D-glutamate ligase of Prochlorococcus marinus (strain SARG / CCMP1375 / SS120).